Consider the following 25-residue polypeptide: Ocellatin-K1 (25 aa).

Isoleucine 25 carries the post-translational modification Isoleucine amide.

As to expression, expressed by the skin glands.

The protein localises to the secreted. Its function is as follows. Has hemolytic and antibacterial activity. The protein is Ocellatin-K1 of Leptodactylus knudseni (Knudsen's thin-toed frog).